The chain runs to 390 residues: Protein phosphatase 1B (390 aa).

Positions 1 to 14 (MGAFLDKPKTEKHN) are enriched in basic and acidic residues. A disordered region spans residues 1 to 20 (MGAFLDKPKTEKHNAHGAGN). G2 is lipidated: N-myristoyl glycine. K12 participates in a covalent cross-link: Glycyl lysine isopeptide (Lys-Gly) (interchain with G-Cter in ISG15). The region spanning 23 to 295 (RYGLSSMQGW…DNMSVVLVCF (273 aa)) is the PPM-type phosphatase domain. The Mn(2+) site is built by D60, G61, D243, and D286. The segment at 371 to 390 (NPHKDNDGGAGDLEDSLVAL) is disordered. S386 is modified (phosphoserine).

This sequence belongs to the PP2C family. Monomer. Interacts with PAK6. Interacts with the phosphorylated form of IKBKB/IKKB. It depends on Mg(2+) as a cofactor. Mn(2+) is required as a cofactor. Isgylation negatively regulates its activity. Post-translationally, N-myristoylation is essential for the recognition of its substrates for dephosphorylation. Isoform 1: Expressed ubiquitously. Isoform 2: Expressed exclusively in testis and intestine. Isoform 3: Expressed exclusively in brain and intestine. Isoform 4: Expressed exclusively in testis and intestine.

Its subcellular location is the cytoplasm. It localises to the cytosol. The protein localises to the membrane. It carries out the reaction O-phospho-L-seryl-[protein] + H2O = L-seryl-[protein] + phosphate. It catalyses the reaction O-phospho-L-threonyl-[protein] + H2O = L-threonyl-[protein] + phosphate. Enzyme with a broad specificity. Dephosphorylates PRKAA1 and PRKAA2. Inhibits TBK1-mediated antiviral signaling by dephosphorylating it at 'Ser-172'. Plays an important role in the termination of TNF-alpha-mediated NF-kappa-B activation through dephosphorylating and inactivating IKBKB/IKKB. This is Protein phosphatase 1B (Ppm1b) from Mus musculus (Mouse).